Reading from the N-terminus, the 121-residue chain is Small ribosomal subunit protein uS13 (121 aa).

The disordered stretch occupies residues 91 to 121 (HRRGLPVRGQNTKNNARTRKGPSKTVAGKKK). The span at 106–121 (ARTRKGPSKTVAGKKK) shows a compositional bias: basic residues.

It belongs to the universal ribosomal protein uS13 family. In terms of assembly, part of the 30S ribosomal subunit. Forms a loose heterodimer with protein S19. Forms two bridges to the 50S subunit in the 70S ribosome.

Functionally, located at the top of the head of the 30S subunit, it contacts several helices of the 16S rRNA. In the 70S ribosome it contacts the 23S rRNA (bridge B1a) and protein L5 of the 50S subunit (bridge B1b), connecting the 2 subunits; these bridges are implicated in subunit movement. Contacts the tRNAs in the A and P-sites. This Listeria welshimeri serovar 6b (strain ATCC 35897 / DSM 20650 / CCUG 15529 / CIP 8149 / NCTC 11857 / SLCC 5334 / V8) protein is Small ribosomal subunit protein uS13.